The chain runs to 559 residues: Dihydroxy-acid dehydratase (559 aa).

D78 lines the Mg(2+) pocket. C119 is a [2Fe-2S] cluster binding site. Mg(2+)-binding residues include D120 and K121. Position 121 is an N6-carboxylysine (K121). C192 provides a ligand contact to [2Fe-2S] cluster. E446 is a binding site for Mg(2+). S472 serves as the catalytic Proton acceptor.

Belongs to the IlvD/Edd family. As to quaternary structure, homodimer. It depends on [2Fe-2S] cluster as a cofactor. The cofactor is Mg(2+).

The enzyme catalyses (2R)-2,3-dihydroxy-3-methylbutanoate = 3-methyl-2-oxobutanoate + H2O. The catalysed reaction is (2R,3R)-2,3-dihydroxy-3-methylpentanoate = (S)-3-methyl-2-oxopentanoate + H2O. The protein operates within amino-acid biosynthesis; L-isoleucine biosynthesis; L-isoleucine from 2-oxobutanoate: step 3/4. Its pathway is amino-acid biosynthesis; L-valine biosynthesis; L-valine from pyruvate: step 3/4. In terms of biological role, functions in the biosynthesis of branched-chain amino acids. Catalyzes the dehydration of (2R,3R)-2,3-dihydroxy-3-methylpentanoate (2,3-dihydroxy-3-methylvalerate) into 2-oxo-3-methylpentanoate (2-oxo-3-methylvalerate) and of (2R)-2,3-dihydroxy-3-methylbutanoate (2,3-dihydroxyisovalerate) into 2-oxo-3-methylbutanoate (2-oxoisovalerate), the penultimate precursor to L-isoleucine and L-valine, respectively. This chain is Dihydroxy-acid dehydratase, found in Wolinella succinogenes (strain ATCC 29543 / DSM 1740 / CCUG 13145 / JCM 31913 / LMG 7466 / NCTC 11488 / FDC 602W) (Vibrio succinogenes).